The sequence spans 429 residues: Glutamyl-tRNA reductase (429 aa).

Substrate-binding positions include Thr-50–Arg-53, Ser-108, Glu-113–Gln-115, and Gln-119. Catalysis depends on Cys-51, which acts as the Nucleophile. An NADP(+)-binding site is contributed by Gly-188–Ile-193.

The protein belongs to the glutamyl-tRNA reductase family. Homodimer.

The enzyme catalyses (S)-4-amino-5-oxopentanoate + tRNA(Glu) + NADP(+) = L-glutamyl-tRNA(Glu) + NADPH + H(+). It participates in porphyrin-containing compound metabolism; protoporphyrin-IX biosynthesis; 5-aminolevulinate from L-glutamyl-tRNA(Glu): step 1/2. Its function is as follows. Catalyzes the NADPH-dependent reduction of glutamyl-tRNA(Glu) to glutamate 1-semialdehyde (GSA). The protein is Glutamyl-tRNA reductase of Polaromonas naphthalenivorans (strain CJ2).